A 344-amino-acid polypeptide reads, in one-letter code: HTH-type transcriptional regulator MalR (344 aa).

The HTH lacI-type domain occupies 1 to 54; the sequence is MTTRLADIAAQAGVSEATVSRVLNGKPGVAATTRQSVLAALDVLGYERPVRLRQ. The H-T-H motif DNA-binding region spans 5–24; the sequence is LADIAAQAGVSEATVSRVLN.

In terms of biological role, transcriptional repressor of the maltosaccharide utilization operon malEFG. The chain is HTH-type transcriptional regulator MalR (malR) from Streptomyces coelicolor (strain ATCC BAA-471 / A3(2) / M145).